A 318-amino-acid polypeptide reads, in one-letter code: Tyrosine--tRNA ligase (318 aa).

Position 35 (tyrosine 35) interacts with L-tyrosine. A 'HIGH' region motif is present at residues 40–48 (PSGKVHLGH). Residues tyrosine 154, glutamine 158, aspartate 161, and glutamine 176 each coordinate L-tyrosine. The 'KMSKS' region motif lies at 211-215 (KMSSS). An ATP-binding site is contributed by serine 214.

It belongs to the class-I aminoacyl-tRNA synthetase family. TyrS type 3 subfamily. In terms of assembly, homodimer.

The protein resides in the cytoplasm. The catalysed reaction is tRNA(Tyr) + L-tyrosine + ATP = L-tyrosyl-tRNA(Tyr) + AMP + diphosphate + H(+). Its function is as follows. Catalyzes the attachment of tyrosine to tRNA(Tyr) in a two-step reaction: tyrosine is first activated by ATP to form Tyr-AMP and then transferred to the acceptor end of tRNA(Tyr). The sequence is that of Tyrosine--tRNA ligase from Methanosphaera stadtmanae (strain ATCC 43021 / DSM 3091 / JCM 11832 / MCB-3).